The following is a 184-amino-acid chain: Cell wall protein phiA (184 aa).

Residues 1-21 (MQLKNLIFAAATAAALPATDA) form the signal peptide. N-linked (GlcNAc...) asparagine glycosylation is present at Asn58.

This sequence belongs to the phiA family.

It is found in the secreted. Its subcellular location is the cell wall. In terms of biological role, cell wall protein involved in development of asexual structures such as phialide and conidium development, and thus required for spore formation. Plays a role as a general stress protectant produced by the fungus in competition with antagonistic bacteria. This Aspergillus niger (strain ATCC MYA-4892 / CBS 513.88 / FGSC A1513) protein is Cell wall protein phiA.